A 200-amino-acid chain; its full sequence is H-2 class I histocompatibility antigen, Q9 alpha chain (200 aa).

The signal sequence occupies residues 1–21 (MALTMLLLLVAAALTLIETRA). Positions 22–111 (GQHSLQYFHT…AQSYYNQSKG (90 aa)) are alpha-1. Residues 22-200 (GQHSLQYFHT…RYLELGKETL (179 aa)) are Extracellular-facing. Asparagine 107 carries N-linked (GlcNAc...) asparagine glycosylation. An alpha-2 region spans residues 112–200 (GSHTLQWMYG…RYLELGKETL (89 aa)). Residues cysteine 122 and cysteine 185 are joined by a disulfide bond.

This sequence belongs to the MHC class I family. As to quaternary structure, heterodimer of an alpha chain and a beta chain (beta-2-microglobulin).

It localises to the membrane. Involved in the presentation of foreign antigens to the immune system. The sequence is that of H-2 class I histocompatibility antigen, Q9 alpha chain (H2-Q9) from Mus musculus (Mouse).